The chain runs to 183 residues: Adenine phosphoribosyltransferase (183 aa).

This sequence belongs to the purine/pyrimidine phosphoribosyltransferase family. In terms of assembly, homodimer.

It localises to the cytoplasm. The enzyme catalyses AMP + diphosphate = 5-phospho-alpha-D-ribose 1-diphosphate + adenine. It participates in purine metabolism; AMP biosynthesis via salvage pathway; AMP from adenine: step 1/1. In terms of biological role, catalyzes a salvage reaction resulting in the formation of AMP, that is energically less costly than de novo synthesis. The chain is Adenine phosphoribosyltransferase from Escherichia fergusonii (strain ATCC 35469 / DSM 13698 / CCUG 18766 / IAM 14443 / JCM 21226 / LMG 7866 / NBRC 102419 / NCTC 12128 / CDC 0568-73).